Reading from the N-terminus, the 23-residue chain is Protein DCL, chloroplastic (23 aa).

Its subcellular location is the plastid. It localises to the chloroplast. Its function is as follows. Has a function in the early stage of chloroplast development and palisade cell morphogenesis. This chain is Protein DCL, chloroplastic, found in Pseudotsuga menziesii (Douglas-fir).